We begin with the raw amino-acid sequence, 201 residues long: 3-isopropylmalate dehydratase small subunit (201 aa).

It belongs to the LeuD family. LeuD type 1 subfamily. Heterodimer of LeuC and LeuD.

It carries out the reaction (2R,3S)-3-isopropylmalate = (2S)-2-isopropylmalate. Its pathway is amino-acid biosynthesis; L-leucine biosynthesis; L-leucine from 3-methyl-2-oxobutanoate: step 2/4. Its function is as follows. Catalyzes the isomerization between 2-isopropylmalate and 3-isopropylmalate, via the formation of 2-isopropylmaleate. In Sinorhizobium medicae (strain WSM419) (Ensifer medicae), this protein is 3-isopropylmalate dehydratase small subunit.